Consider the following 526-residue polypeptide: Radial spoke head protein 6 homolog A (526 aa).

Disordered regions lie at residues 180-231 (EGED…EENG), 371-411 (VKSE…DAEI), and 469-526 (PPAP…EEDD). Composition is skewed to acidic residues over residues 181–212 (GEDDEAEEGGEEEEKGEVEDDVEEEENEEAED) and 374–395 (EEEEDEEEAEEEEKEEENEPEP). The segment covering 497–506 (QALKAAKEEA) has biased composition (basic and acidic residues). Acidic residues predominate over residues 507–526 (EAAAEEMEEEEDEEEEEEDD).

It belongs to the flagellar radial spoke RSP4/6 family. Component of sperm axonemal radial spoke complexes.

The protein localises to the cytoplasm. Its subcellular location is the cytoskeleton. It localises to the flagellum axoneme. Its function is as follows. Functions as part of radial spoke complexes in the axoneme of sperm flagella that play an important part in motility. The triple radial spokes (RS1, RS2 and RS3) are required to modulate beating of the sperm flagellum. In Xenopus tropicalis (Western clawed frog), this protein is Radial spoke head protein 6 homolog A (rsph6a).